Here is a 1280-residue protein sequence, read N- to C-terminus: Rho guanine nucleotide exchange factor 10-like protein (1280 aa).

Residues 1 to 10 show a composition bias toward pro residues; the sequence is MASSNPPPQP. The disordered stretch occupies residues 1-94; the sequence is MASSNPPPQP…TEAPTVVSNG (94 aa). The segment covering 26–46 has biased composition (acidic residues); that stretch reads EVEEDSGEAFEFDDSDEEEDT. At Ser-40 the chain carries Phosphoserine. A compositionally biased stretch (low complexity) spans 78-89; the sequence is PAAAPPQTEAPT. Residues Tyr-131 and Tyr-152 each carry the phosphotyrosine modification. The interval 161 to 202 is disordered; the sequence is PRETEDLGWSSSEFESYSEDSGEETKPEAEPTKHRGSFQPKL. Residues 183-193 are compositionally biased toward basic and acidic residues; it reads EETKPEAEPTK. Ser-279 is subject to Phosphoserine. One can recognise a DH domain in the interval 314–501; the sequence is VRRHILGSIV…ETLAEKLNEQ (188 aa). Disordered regions lie at residues 1133-1163 and 1186-1207; these read QEEA…HTAR and PLLS…SEED.

Interacts with RHOA, RHOB and RHOC.

Its subcellular location is the cytoplasm. Its function is as follows. Acts as a guanine nucleotide exchange factor (GEF) for RHOA, RHOB and RHOC. This Mus musculus (Mouse) protein is Rho guanine nucleotide exchange factor 10-like protein (Arhgef10l).